Reading from the N-terminus, the 449-residue chain is Kynurenine 3-monooxygenase (449 aa).

The protein belongs to the aromatic-ring hydroxylase family. KMO subfamily. The cofactor is FAD.

The enzyme catalyses L-kynurenine + NADPH + O2 + H(+) = 3-hydroxy-L-kynurenine + NADP(+) + H2O. It functions in the pathway cofactor biosynthesis; NAD(+) biosynthesis; quinolinate from L-kynurenine: step 1/3. In terms of biological role, catalyzes the hydroxylation of L-kynurenine (L-Kyn) to form 3-hydroxy-L-kynurenine (L-3OHKyn). Required for synthesis of quinolinic acid. This chain is Kynurenine 3-monooxygenase, found in Legionella pneumophila (strain Lens).